Reading from the N-terminus, the 162-residue chain is uncharacterized protein (162 aa).

The tract at residues 1 to 23 (MAQLPLSPAPQRPETKTPGKPEA) is disordered. The segment covering 13–23 (PETKTPGKPEA) has biased composition (basic and acidic residues).

This is an uncharacterized protein from Rhodobacter capsulatus (Rhodopseudomonas capsulata).